Reading from the N-terminus, the 532-residue chain is Phosphoenolpyruvate carboxylase (532 aa).

This sequence belongs to the PEPCase type 2 family. As to quaternary structure, homotetramer. Mg(2+) serves as cofactor.

It catalyses the reaction oxaloacetate + phosphate = phosphoenolpyruvate + hydrogencarbonate. Functionally, catalyzes the irreversible beta-carboxylation of phosphoenolpyruvate (PEP) to form oxaloacetate (OAA), a four-carbon dicarboxylic acid source for the tricarboxylic acid cycle. The chain is Phosphoenolpyruvate carboxylase from Methanopyrus kandleri (strain AV19 / DSM 6324 / JCM 9639 / NBRC 100938).